Consider the following 875-residue polypeptide: Alanine--tRNA ligase (875 aa).

4 residues coordinate Zn(2+): H564, H568, C666, and H670.

This sequence belongs to the class-II aminoacyl-tRNA synthetase family. As to quaternary structure, homotetramer. Zn(2+) serves as cofactor.

Its subcellular location is the cytoplasm. The catalysed reaction is tRNA(Ala) + L-alanine + ATP = L-alanyl-tRNA(Ala) + AMP + diphosphate. In terms of biological role, catalyzes the attachment of alanine to tRNA(Ala) in a two-step reaction: alanine is first activated by ATP to form Ala-AMP and then transferred to the acceptor end of tRNA(Ala). Also edits incorrectly charged Ser-tRNA(Ala) and Gly-tRNA(Ala) via its editing domain. This chain is Alanine--tRNA ligase, found in Enterobacter sp. (strain 638).